A 75-amino-acid chain; its full sequence is Brevinin-2SN1 (75 aa).

Residues 1 to 22 (MFTMKKPLLFLFFLGTISLSFC) form the signal peptide. Positions 23 to 40 (EEERGADEDDEVEMTEEE) are cleaved as a propeptide — removed in mature form. C69 and C75 form a disulfide bridge.

This sequence belongs to the frog skin active peptide (FSAP) family. Brevinin subfamily. As to expression, expressed by the skin glands.

Its subcellular location is the secreted. Functionally, antimicrobial peptide. Active against some Gram-negative and a variety of Gram-positive bacterial strains. Active against fungus C.glabrata 090902 but not against C.albicans ATCC 10231. Shows hemolytic activity against human erythrocytes. In Sylvirana spinulosa (Fine-spined frog), this protein is Brevinin-2SN1.